Here is a 182-residue protein sequence, read N- to C-terminus: Lipoprotein signal peptidase (182 aa).

The next 4 membrane-spanning stretches (helical) occupy residues 15 to 35 (IYLGVIFLGIVLDLVTKFLVI), 44 to 64 (LEVFGSFFRMTLTFNTGFVFG), 65 to 85 (AFQDNAIPSLIATGVAIVFLI), and 97 to 117 (PWGWNLVMAGAFGNFLDKFFV). Residues Asp-140 and Asp-162 contribute to the active site. The helical transmembrane segment at 155–175 (WPAFNVADSCVTIGLTILIFT) threads the bilayer.

It belongs to the peptidase A8 family.

It is found in the cell inner membrane. The catalysed reaction is Release of signal peptides from bacterial membrane prolipoproteins. Hydrolyzes -Xaa-Yaa-Zaa-|-(S,diacylglyceryl)Cys-, in which Xaa is hydrophobic (preferably Leu), and Yaa (Ala or Ser) and Zaa (Gly or Ala) have small, neutral side chains.. It functions in the pathway protein modification; lipoprotein biosynthesis (signal peptide cleavage). In terms of biological role, this protein specifically catalyzes the removal of signal peptides from prolipoproteins. The sequence is that of Lipoprotein signal peptidase from Leptospira interrogans serogroup Icterohaemorrhagiae serovar Lai (strain 56601).